The chain runs to 53 residues: Large ribosomal subunit protein eL24 (53 aa).

Zn(2+) is bound by residues C4, C7, C30, and C34. A C4-type zinc finger spans residues 4–34 (CSFCNKEIEEGTGKMYVKKDGSIYFFCSSKC).

The protein belongs to the eukaryotic ribosomal protein eL24 family. As to quaternary structure, part of the 50S ribosomal subunit. Forms a cluster with proteins L3 and L14. It depends on Zn(2+) as a cofactor.

In terms of biological role, binds to the 23S rRNA. This Methanobrevibacter smithii (strain ATCC 35061 / DSM 861 / OCM 144 / PS) protein is Large ribosomal subunit protein eL24.